The chain runs to 236 residues: Putative lipoprotein MlpA (236 aa).

The first 21 residues, 1-21 (MTKNIVNTALVLVGAGSLLTG), serve as a signal peptide directing secretion. Cysteine 22 carries N-palmitoyl cysteine lipidation. Cysteine 22 carries the S-diacylglycerol cysteine lipid modification.

The protein resides in the cell membrane. The sequence is that of Putative lipoprotein MlpA (mlpA) from Myxococcus xanthus.